Consider the following 911-residue polypeptide: Gem-associated protein 4a (911 aa).

As to quaternary structure, component of the core survival motor neuron (SMN) complex composed of Smn, Gem2, Gem3, rig/Gem5 and one of 3 almost identical Gem4 paralogs encoded by Glos/Gem4a, Gem4b or Gem4c. Interacts with Smn; the interaction is probably indirect.

Component of the survival motor neuron (SMN) complex that catalyzes the assembly of small nuclear ribonucleoproteins (snRNPs), the building blocks of the spliceosome, and thereby plays an important role in the splicing of cellular pre-mRNAs. One of 3 almost identical paralogs (Glos/Gem4a, Gem4b and Gem4c), resulting from a genomic triplication, that have some redundant function. Required for neuromuscular function and organismal viability. The chain is Gem-associated protein 4a from Drosophila melanogaster (Fruit fly).